Reading from the N-terminus, the 251-residue chain is Triosephosphate isomerase (251 aa).

Substrate is bound at residue 9 to 11 (NWK). Catalysis depends on H95, which acts as the Electrophile. E167 serves as the catalytic Proton acceptor. Residues G173, S213, and 234 to 235 (GG) contribute to the substrate site.

The protein belongs to the triosephosphate isomerase family. As to quaternary structure, homodimer.

Its subcellular location is the cytoplasm. The enzyme catalyses D-glyceraldehyde 3-phosphate = dihydroxyacetone phosphate. Its pathway is carbohydrate biosynthesis; gluconeogenesis. It participates in carbohydrate degradation; glycolysis; D-glyceraldehyde 3-phosphate from glycerone phosphate: step 1/1. Its function is as follows. Involved in the gluconeogenesis. Catalyzes stereospecifically the conversion of dihydroxyacetone phosphate (DHAP) to D-glyceraldehyde-3-phosphate (G3P). The sequence is that of Triosephosphate isomerase from Pelobacter propionicus (strain DSM 2379 / NBRC 103807 / OttBd1).